A 273-amino-acid polypeptide reads, in one-letter code: MPKNFKKHLPLKKYGQNFLINKDTIKNIIKIIDPKTTETLVEIGPGLAALTKPMCELLEELIVIEIDQDLLFLLKKRSFYSKLIVFYQNALNFNFLNLFHKKKQLIRIFGNLPYNISTSLIIFLFKQIKVIQDMNFMLQKEVAERLISTPGNKSYGRLSIISQYYCDIKILLNVSPEDFRPIPKVHSVFINLKPHTNSPYFVYNVNILSAITKDAFQNRRKILRHSLKNLFSEKELIKLEINSNLRAENVSVSHYCKLANYLYKKSNNLLKIN.

Positions 17, 19, 44, 65, and 111 each coordinate S-adenosyl-L-methionine.

The protein belongs to the class I-like SAM-binding methyltransferase superfamily. rRNA adenine N(6)-methyltransferase family. RsmA subfamily.

It is found in the cytoplasm. The enzyme catalyses adenosine(1518)/adenosine(1519) in 16S rRNA + 4 S-adenosyl-L-methionine = N(6)-dimethyladenosine(1518)/N(6)-dimethyladenosine(1519) in 16S rRNA + 4 S-adenosyl-L-homocysteine + 4 H(+). In terms of biological role, specifically dimethylates two adjacent adenosines (A1518 and A1519) in the loop of a conserved hairpin near the 3'-end of 16S rRNA in the 30S particle. May play a critical role in biogenesis of 30S subunits. The sequence is that of Ribosomal RNA small subunit methyltransferase A from Buchnera aphidicola subsp. Acyrthosiphon pisum (strain APS) (Acyrthosiphon pisum symbiotic bacterium).